Here is a 149-residue protein sequence, read N- to C-terminus: Nucleoside diphosphate kinase (149 aa).

Residues Lys-9, Phe-57, Arg-85, Thr-91, Arg-102, and Asn-112 each contribute to the ATP site. The Pros-phosphohistidine intermediate role is filled by His-115.

The protein belongs to the NDK family. As to quaternary structure, homotetramer. It depends on Mg(2+) as a cofactor.

The protein resides in the cytoplasm. The catalysed reaction is a 2'-deoxyribonucleoside 5'-diphosphate + ATP = a 2'-deoxyribonucleoside 5'-triphosphate + ADP. It catalyses the reaction a ribonucleoside 5'-diphosphate + ATP = a ribonucleoside 5'-triphosphate + ADP. Functionally, major role in the synthesis of nucleoside triphosphates other than ATP. The ATP gamma phosphate is transferred to the NDP beta phosphate via a ping-pong mechanism, using a phosphorylated active-site intermediate. In Staphylococcus saprophyticus subsp. saprophyticus (strain ATCC 15305 / DSM 20229 / NCIMB 8711 / NCTC 7292 / S-41), this protein is Nucleoside diphosphate kinase.